Reading from the N-terminus, the 805-residue chain is Zinc finger CCCH domain-containing protein 11B (805 aa).

2 consecutive C3H1-type zinc fingers follow at residues 2–29 (PNQGEDCYFFFYSTCTKGDSCPFRHCEA) and 31–57 (LGNETVCTLWQEGRCFRRVCRFRHMEI). 6 disordered regions span residues 140–194 (KVES…GLRV), 223–351 (KKMK…DKVN), 364–433 (MLLE…TCIK), 449–468 (IVASKGQSEEPAGKTKSMQE), 481–506 (KALRVQQSSESSTSSPSQHEATPGAR), and 715–805 (VTVP…PLEL). Over residues 160–175 (ADDDEDDDDQFSEEGD) the composition is skewed to acidic residues. Residues 364 to 390 (MLLERASQKHGESQTKLKTEGPSKTDD) are compositionally biased toward basic and acidic residues. The span at 391-402 (STSGARSSSTIR) shows a compositional bias: polar residues. A coiled-coil region spans residues 403 to 423 (IKTFSEVLAEEEHRQQEAERQ). Basic and acidic residues-rich tracts occupy residues 412–433 (EEEHRQQEAERQKSKKDTTCIK) and 455–468 (QSEEPAGKTKSMQE). Composition is skewed to low complexity over residues 486–498 (QQSSESSTSSPSQ) and 730–749 (PPTQSSSDSSPPEVSGPSSS). A compositionally biased stretch (polar residues) spans 750–763 (QMSMKTRRLSSAST). Residues 789 to 805 (EIDLDPGKDEDDLPLEL) are compositionally biased toward acidic residues.

May play a role in mRNA transport. The polypeptide is Zinc finger CCCH domain-containing protein 11B (Homo sapiens (Human)).